Here is a 123-residue protein sequence, read N- to C-terminus: UPF0102 protein PSHAa2523 (123 aa).

It belongs to the UPF0102 family.

The sequence is that of UPF0102 protein PSHAa2523 from Pseudoalteromonas translucida (strain TAC 125).